We begin with the raw amino-acid sequence, 367 residues long: Membrane-bound lytic murein transglycosylase C (367 aa).

The signal sequence occupies residues 1–19 (MRKYAKYLPFCLVVPFLAA). C20 is lipidated: N-palmitoyl cysteine. A lipid anchor (S-diacylglycerol cysteine) is attached at C20.

The protein belongs to the transglycosylase Slt family.

The protein localises to the cell outer membrane. It carries out the reaction Exolytic cleavage of the (1-&gt;4)-beta-glycosidic linkage between N-acetylmuramic acid (MurNAc) and N-acetylglucosamine (GlcNAc) residues in peptidoglycan, from either the reducing or the non-reducing ends of the peptidoglycan chains, with concomitant formation of a 1,6-anhydrobond in the MurNAc residue.. Its function is as follows. Murein-degrading enzyme. May play a role in recycling of muropeptides during cell elongation and/or cell division. The polypeptide is Membrane-bound lytic murein transglycosylase C (Haemophilus ducreyi (strain 35000HP / ATCC 700724)).